The chain runs to 45 residues: Large ribosomal subunit protein bL34 (45 aa).

This sequence belongs to the bacterial ribosomal protein bL34 family.

The polypeptide is Large ribosomal subunit protein bL34 (Paenarthrobacter aurescens (strain TC1)).